Here is a 357-residue protein sequence, read N- to C-terminus: Arginine kinase (357 aa).

Residues K9–E91 enclose the Phosphagen kinase N-terminal domain. G64–G66 is an L-arginine binding site. The 238-residue stretch at Y119 to A356 folds into the Phosphagen kinase C-terminal domain. Residues S122 to R126 and H185 contribute to the ATP site. Residue E225 participates in L-arginine binding. R229 contacts ATP. An L-arginine-binding site is contributed by C271. ATP contacts are provided by residues R280–H284 and R309–E314.

This sequence belongs to the ATP:guanido phosphotransferase family.

It carries out the reaction L-arginine + ATP = N(omega)-phospho-L-arginine + ADP + H(+). Catalyzes the reversible transfer of high energy ATP gamma-phosphate group to L-arginine. In Polybetes pythagoricus (South American huntsman spider), this protein is Arginine kinase.